We begin with the raw amino-acid sequence, 332 residues long: Caffeoylshikimate esterase (332 aa).

Residues 1–13 (MPSEAESSANSAP) are compositionally biased toward low complexity. The interval 1-26 (MPSEAESSANSAPATPPPPPNFWGTM) is disordered. The active-site Nucleophile is Ser147. Residues Asp268 and His298 each act as charge relay system in the active site.

The protein belongs to the AB hydrolase superfamily. Monoacylglycerol lipase family. In terms of assembly, interacts with ACBP2. In terms of tissue distribution, expressed in vasculature of roots and leaves, stems, flowers and siliques.

The protein localises to the cell membrane. The catalysed reaction is 5-O-[(E)-caffeoyl]-shikimate + H2O = shikimate + (E)-caffeate + H(+). Functionally, esterase involved in the biosynthesis of lignin. Hydrolyzes caffeoylshikimate into caffeate and shikimate. Together with 4-coumarate--CoA ligase (4CL), acts on an alternative reaction for the formation of caffeoyl-CoA and bypasses the second reaction of shikimate O-hydroxycinnamoyltransferase (HST). Also accepts 4-coumaroylshikimate as substrate, but with lower activity. According to PubMed:20345607 and PubMed:22915575, possesses monoacylglycerol O-acyltransferase, monoacylglycerol lipase and lysophospholipase activities in vitro. With the association of ACBP2, may promote the degradation of lysophosphatidylcholine and detoxify the peroxidized membrane in response to cadmium-induced oxidative stress. However these results require additional confirmation in vivo. The polypeptide is Caffeoylshikimate esterase (CSE) (Arabidopsis thaliana (Mouse-ear cress)).